The following is a 382-amino-acid chain: Serine/threonine-protein kinase US3 homolog (382 aa).

Positions 1 to 10 (MENKQCDHLT) are enriched in basic and acidic residues. The segment at 1–75 (MENKQCDHLT…ASESDEDDDD (75 aa)) is disordered. Over residues 12-24 (WFSTTSDASESMD) the composition is skewed to polar residues. Positions 45 to 75 (ADEDLYSDISEGDLEYSDCDSASESDEDDDD) are enriched in acidic residues. The Protein kinase domain maps to 93-379 (YTVIKTLTPG…AEELLSYPMF (287 aa)). ATP contacts are provided by residues 99-107 (LTPGSEGRV) and Lys-122. Residue Asp-207 is the Proton acceptor of the active site.

It belongs to the protein kinase superfamily. Ser/Thr protein kinase family. Post-translationally, phosphorylated by protein 49; this phosphorylation regulates subsequent phosphorylation of proteins 26 and 29 by US3 homolog. Autophosphorylated.

The protein resides in the host cytoplasm. Its subcellular location is the host nucleus. It catalyses the reaction L-seryl-[protein] + ATP = O-phospho-L-seryl-[protein] + ADP + H(+). It carries out the reaction L-threonyl-[protein] + ATP = O-phospho-L-threonyl-[protein] + ADP + H(+). In terms of biological role, multifunctional serine/threonine kinase that plays a role in several processes including egress of virus particles from the nucleus, modulation of the actin cytoskeleton and inhibition of apoptosis. Phosphorylates protein 26 and 29, two critical regulators of capsid budding from nucleus to endoplasmic reticulum, thereby facilitating virion egress. Modulates and redistributes host components of the nuclear envelope, including LMNA, emerin/EMD and the nuclear matrix protein MATR3. Phosphorylates envelope glycoprotein B (gB), probably to direct it to the cell surface. Promotes virus intracellular spread by restructuring host cell cytoskeleton. Blocks host apoptosis to extend cell survival and allow efficient viral replication. Promotes viral gene expression by phosphorylating host HDAC2 to reduce viral genome silencing. The protein is Serine/threonine-protein kinase US3 homolog of Equine herpesvirus 1 (strain Ab4p) (EHV-1).